The sequence spans 1072 residues: Carbamoyl phosphate synthase large chain (1072 aa).

Residues 1-401 (MPKRLDINTI…SLLKAVRSLE (401 aa)) form a carboxyphosphate synthetic domain region. The ATP site is built by R129, R169, G175, G176, K208, I210, E215, G241, V242, H243, Q284, and E298. Residues 133 to 327 (RTLMQELNEP…IAKLAAKIAV (195 aa)) form the ATP-grasp 1 domain. The Mg(2+) site is built by Q284, E298, and N300. Q284, E298, and N300 together coordinate Mn(2+). The tract at residues 402 to 546 (LGVYHLELEH…YSTYGDENES (145 aa)) is oligomerization domain. The segment at 547–929 (VRTDRKSVVV…ALYKGLVASG (383 aa)) is carbamoyl phosphate synthetic domain. The ATP-grasp 2 domain maps to 671-861 (EAALTQLGIP…MANVATKVIL (191 aa)). ATP contacts are provided by R707, R746, E752, G777, V778, H779, S780, Q820, and E832. Mg(2+) is bound by residues Q820, E832, and N834. Positions 820, 832, and 834 each coordinate Mn(2+). An MGS-like domain is found at 930-1072 (INIPTHGSVI…QTKRHEVVHA (143 aa)). Residues 930-1072 (INIPTHGSVI…QTKRHEVVHA (143 aa)) are allosteric domain.

This sequence belongs to the CarB family. Composed of two chains; the small (or glutamine) chain promotes the hydrolysis of glutamine to ammonia, which is used by the large (or ammonia) chain to synthesize carbamoyl phosphate. Tetramer of heterodimers (alpha,beta)4. The cofactor is Mg(2+). Requires Mn(2+) as cofactor.

It carries out the reaction hydrogencarbonate + L-glutamine + 2 ATP + H2O = carbamoyl phosphate + L-glutamate + 2 ADP + phosphate + 2 H(+). It catalyses the reaction hydrogencarbonate + NH4(+) + 2 ATP = carbamoyl phosphate + 2 ADP + phosphate + 2 H(+). Its pathway is amino-acid biosynthesis; L-arginine biosynthesis; carbamoyl phosphate from bicarbonate: step 1/1. It participates in pyrimidine metabolism; UMP biosynthesis via de novo pathway; (S)-dihydroorotate from bicarbonate: step 1/3. Its function is as follows. Large subunit of the glutamine-dependent carbamoyl phosphate synthetase (CPSase). CPSase catalyzes the formation of carbamoyl phosphate from the ammonia moiety of glutamine, carbonate, and phosphate donated by ATP, constituting the first step of 2 biosynthetic pathways, one leading to arginine and/or urea and the other to pyrimidine nucleotides. The large subunit (synthetase) binds the substrates ammonia (free or transferred from glutamine from the small subunit), hydrogencarbonate and ATP and carries out an ATP-coupled ligase reaction, activating hydrogencarbonate by forming carboxy phosphate which reacts with ammonia to form carbamoyl phosphate. The chain is Carbamoyl phosphate synthase large chain from Bacillus cereus (strain G9842).